The primary structure comprises 344 residues: Beta-1,4-galactosyltransferase 4 (344 aa).

At 1–12 the chain is on the cytoplasmic side; it reads MGCNPPYLLSYR. Residues 13 to 38 traverse the membrane as a helical; Signal-anchor for type II membrane protein segment; sequence LRLLLLFTLCLTVLGWATSNYFVGAI. Residues 39-344 lie on the Lumenal side of the membrane; that stretch reads QVIPRAKNFM…NITVDFWTAA (306 aa). A disulfide bridge connects residues Cys77 and Cys118. UDP-alpha-D-galactose contacts are provided by residues 129-133, 168-170, and 195-196; these read PHRNR, FNR, and VD. Cys189 and Cys208 are disulfide-bonded. Residue Asp196 coordinates Mn(2+). An N-linked (GlcNAc...) asparagine glycan is attached at Asn220. Tyr224 and Trp256 together coordinate UDP-alpha-D-galactose. N-acetyl-D-glucosamine is bound at residue 258–261; sequence GEDD. His289 provides a ligand contact to Mn(2+). 289 to 291 contributes to the UDP-alpha-D-galactose binding site; it reads HTR. Arg301 contacts N-acetyl-D-glucosamine. Asn335 is a glycosylation site (N-linked (GlcNAc...) asparagine).

This sequence belongs to the glycosyltransferase 7 family. Interacts with SLC35A2/UGT1. It depends on Mn(2+) as a cofactor.

It is found in the golgi apparatus membrane. The protein localises to the secreted. It carries out the reaction N-acetyl-D-glucosamine + UDP-alpha-D-galactose = beta-D-galactosyl-(1-&gt;4)-N-acetyl-D-glucosamine + UDP + H(+). The catalysed reaction is a beta-D-GlcNAc-(1-&gt;3)-beta-D-Gal-(1-&gt;4)-beta-D-Glc-(1&lt;-&gt;1)-Cer(d18:1(4E)) + UDP-alpha-D-galactose = a neolactoside nLc4Cer(d18:1(4E)) + UDP + H(+). The enzyme catalyses 3-O-{beta-D-galactosyl-(1-&gt;3)-[6-O-sulfo-N-acetyl-beta-D-glucosaminyl-(1-&gt;6)]-N-acetyl-alpha-D-galactosaminyl}-L-seryl-[protein] + UDP-alpha-D-galactose = 3-O-{beta-D-galactosyl-(1-&gt;3)-[beta-D-galactosyl-(1-&gt;4)-6-O-sulfo-N-acetyl-beta-D-glucosaminyl-(1-&gt;6)]-N-acetyl-alpha-D-galactosaminyl}-L-seryl-[protein] + UDP + H(+). It catalyses the reaction 3-O-{beta-D-galactosyl-(1-&gt;3)-[6-O-sulfo-N-acetyl-beta-D-glucosaminyl-(1-&gt;6)]-N-acetyl-alpha-D-galactosaminyl}-L-threonyl-[protein] + UDP-alpha-D-galactose = 3-O-{beta-D-galactosyl-(1-&gt;3)-[beta-D-galactosyl-(1-&gt;4)-6-O-sulfo-N-acetyl-beta-D-glucosaminyl-(1-&gt;6)]-N-acetyl-alpha-D-galactosaminyl}-L-threonyl-[protein] + UDP + H(+). The protein operates within protein modification; protein glycosylation. Its pathway is glycolipid biosynthesis. Functionally, galactose (Gal) transferase involved in the synthesis of terminal N-acetyllactosamine (LacNac) unit present on glycan chains of glycoproteins and glycosphingolipids. Catalyzes the transfer of Gal residue via a beta1-&gt;4 linkage from UDP-Gal to the non-reducing terminal N-acetyl glucosamine 6-O-sulfate (6-O-sulfoGlcNAc) in the linearly growing chain of both N- and O-linked keratan sulfate proteoglycans. Cooperates with B3GNT7 N-acetyl glucosamine transferase and CHST6 and CHST1 sulfotransferases to construct and elongate mono- and disulfated disaccharide units [-&gt;3Galbeta1-&gt;4(6-sulfoGlcNAcbeta)1-&gt;] and [-&gt;3(6-sulfoGalbeta)1-&gt;4(6-sulfoGlcNAcbeta)1-&gt;] within keratan sulfate polymer. Transfers Gal residue via a beta1-&gt;4 linkage to terminal 6-O-sulfoGlcNAc within the LacNac unit of core 2 O-glycans forming 6-sulfo-sialyl-Lewis X (sLex). May contribute to the generation of sLex epitope on mucin-type glycoproteins that serve as ligands for SELL/L-selectin, a major regulator of leukocyte migration. In the biosynthesis pathway of neolacto-series glycosphingolipids, transfers Gal residue via a beta1-&gt;4 linkage to terminal GlcNAc of a lactotriaosylceramide (Lc3Cer) acceptor to form a neolactotetraosylceramide. The polypeptide is Beta-1,4-galactosyltransferase 4 (B4galt4) (Rattus norvegicus (Rat)).